The primary structure comprises 930 residues: SCY1-like protein 2 (930 aa).

The region spanning Phe32 to Phe327 is the Protein kinase domain. The HEAT repeat unit spans residues Asp443–Ile479. Phosphoserine is present on residues Ser658 and Ser677. Positions Ser658–Val706 are disordered. A compositionally biased stretch (basic and acidic residues) spans Leu680 to Gln694. A compositionally biased stretch (low complexity) spans Lys695–Gln705. Thr708 carries the phosphothreonine modification. The segment at Gly895–Gly930 is disordered. The span at Gln897–Ser922 shows a compositional bias: low complexity.

It belongs to the protein kinase superfamily. In terms of assembly, interacts with clathrin and AP2B1; the interaction mediates the association with the AP-2 complex. Could autophosphorylate in presence of poly-L-lysine. Ubiquitously expressed.

Its subcellular location is the cytoplasmic vesicle. It is found in the clathrin-coated vesicle. It localises to the golgi apparatus. The protein localises to the trans-Golgi network membrane. The protein resides in the endosome membrane. Functionally, component of the AP2-containing clathrin coat that may regulate clathrin-dependent trafficking at plasma membrane, TGN and endosomal system. A possible serine/threonine-protein kinase toward the beta2-subunit of the plasma membrane adapter complex AP2 and other proteins in presence of poly-L-lysine has not been confirmed. By regulating the expression of excitatory receptors at synapses, plays an essential role in neuronal function and signaling and in brain development. This chain is SCY1-like protein 2, found in Mus musculus (Mouse).